Reading from the N-terminus, the 141-residue chain is Nucleoside diphosphate kinase (141 aa).

Residues K11, F59, R87, T93, R104, and N114 each contribute to the ATP site. H117 serves as the catalytic Pros-phosphohistidine intermediate.

It belongs to the NDK family. As to quaternary structure, homotetramer. Mg(2+) is required as a cofactor.

The protein localises to the cytoplasm. The enzyme catalyses a 2'-deoxyribonucleoside 5'-diphosphate + ATP = a 2'-deoxyribonucleoside 5'-triphosphate + ADP. The catalysed reaction is a ribonucleoside 5'-diphosphate + ATP = a ribonucleoside 5'-triphosphate + ADP. Its function is as follows. Major role in the synthesis of nucleoside triphosphates other than ATP. The ATP gamma phosphate is transferred to the NDP beta phosphate via a ping-pong mechanism, using a phosphorylated active-site intermediate. This is Nucleoside diphosphate kinase from Janthinobacterium sp. (strain Marseille) (Minibacterium massiliensis).